We begin with the raw amino-acid sequence, 341 residues long: Adenine deaminase (341 aa).

Zn(2+) contacts are provided by H24, H26, and H204. The active-site Proton donor is the E207. D285 is a Zn(2+) binding site. Substrate is bound at residue D286.

Belongs to the metallo-dependent hydrolases superfamily. Adenosine and AMP deaminases family. Adenine deaminase type 2 subfamily. It depends on Zn(2+) as a cofactor.

The catalysed reaction is adenine + H2O + H(+) = hypoxanthine + NH4(+). In terms of biological role, catalyzes the hydrolytic deamination of adenine to hypoxanthine. Plays an important role in the purine salvage pathway and in nitrogen catabolism. In Sphingopyxis alaskensis (strain DSM 13593 / LMG 18877 / RB2256) (Sphingomonas alaskensis), this protein is Adenine deaminase.